Reading from the N-terminus, the 581-residue chain is Proline--tRNA ligase (581 aa).

It belongs to the class-II aminoacyl-tRNA synthetase family. ProS type 1 subfamily. In terms of assembly, homodimer.

It is found in the cytoplasm. It catalyses the reaction tRNA(Pro) + L-proline + ATP = L-prolyl-tRNA(Pro) + AMP + diphosphate. In terms of biological role, catalyzes the attachment of proline to tRNA(Pro) in a two-step reaction: proline is first activated by ATP to form Pro-AMP and then transferred to the acceptor end of tRNA(Pro). As ProRS can inadvertently accommodate and process non-cognate amino acids such as alanine and cysteine, to avoid such errors it has two additional distinct editing activities against alanine. One activity is designated as 'pretransfer' editing and involves the tRNA(Pro)-independent hydrolysis of activated Ala-AMP. The other activity is designated 'posttransfer' editing and involves deacylation of mischarged Ala-tRNA(Pro). The misacylated Cys-tRNA(Pro) is not edited by ProRS. This Verminephrobacter eiseniae (strain EF01-2) protein is Proline--tRNA ligase.